The following is a 1113-amino-acid chain: uncharacterized protein (1113 aa).

313 to 320 contacts ATP; sequence GPPGTGKS.

The protein belongs to the DNA2/NAM7 helicase family.

This is an uncharacterized protein from Mycoplasma pneumoniae (strain ATCC 29342 / M129 / Subtype 1) (Mycoplasmoides pneumoniae).